A 363-amino-acid polypeptide reads, in one-letter code: Ribosomal RNA large subunit methyltransferase M (363 aa).

Residues Ser-187, 220-223 (CPGG), Asp-239, Asp-259, and Asp-276 each bind S-adenosyl-L-methionine. The Proton acceptor role is filled by Lys-305.

This sequence belongs to the class I-like SAM-binding methyltransferase superfamily. RNA methyltransferase RlmE family. RlmM subfamily. Monomer.

It localises to the cytoplasm. The catalysed reaction is cytidine(2498) in 23S rRNA + S-adenosyl-L-methionine = 2'-O-methylcytidine(2498) in 23S rRNA + S-adenosyl-L-homocysteine + H(+). Its function is as follows. Catalyzes the 2'-O-methylation at nucleotide C2498 in 23S rRNA. The protein is Ribosomal RNA large subunit methyltransferase M of Shewanella loihica (strain ATCC BAA-1088 / PV-4).